A 220-amino-acid polypeptide reads, in one-letter code: Ribosomal RNA large subunit methyltransferase E (220 aa).

5 residues coordinate S-adenosyl-L-methionine: Gly-64, Trp-66, Asp-92, Asp-108, and Asp-133. Catalysis depends on Lys-173, which acts as the Proton acceptor.

It belongs to the class I-like SAM-binding methyltransferase superfamily. RNA methyltransferase RlmE family.

It localises to the cytoplasm. The enzyme catalyses uridine(2552) in 23S rRNA + S-adenosyl-L-methionine = 2'-O-methyluridine(2552) in 23S rRNA + S-adenosyl-L-homocysteine + H(+). Functionally, specifically methylates the uridine in position 2552 of 23S rRNA at the 2'-O position of the ribose in the fully assembled 50S ribosomal subunit. The polypeptide is Ribosomal RNA large subunit methyltransferase E (Acidovorax sp. (strain JS42)).